The chain runs to 379 residues: NADH-rubredoxin oxidoreductase (379 aa).

2 disulfides stabilise this stretch: C26–C286 and C137–C216. FAD is bound by residues 33 to 35, R42, A79, and Y125; that span reads NSE. An FAD-binding site is contributed by D259.

This sequence belongs to the FAD-dependent oxidoreductase family. In terms of assembly, monomer. FAD is required as a cofactor.

It catalyses the reaction 2 reduced [rubredoxin] + NAD(+) + H(+) = 2 oxidized [rubredoxin] + NADH. Its function is as follows. Catalyzes the NADH-dependent reduction of rubredoxin (Rd). NADPH is a very poor electron donor compared to NADH. Functions as an intermediate component in the electron transfer chain: NADH-&gt;NROR-&gt;Rd-&gt;FprA1/2. Also functions as an intermediate component in the electron transfer chains from NADH to revRbr and Dfx. Therefore, is a key electron carrier in an efficient multienzyme complex that can scavenge O(2) and reactive oxygen species (ROS), and thus plays an important role in the oxidative stress defense system in C.acetobutylicum, an obligate anaerobic bacterium. This Clostridium acetobutylicum (strain ATCC 824 / DSM 792 / JCM 1419 / IAM 19013 / LMG 5710 / NBRC 13948 / NRRL B-527 / VKM B-1787 / 2291 / W) protein is NADH-rubredoxin oxidoreductase (nroR).